A 1052-amino-acid polypeptide reads, in one-letter code: MPPPPHIKPENVLKRAQELIAVGQAPAALNVLHEHVTSKRTRSSPIASLEPVMLLFVELCVDLRKGKAAKDGLYQYKNIAQNTNVGTIEVVLKKFIELAEKKVTEAQAKADEIQSSLESAAPSSNVDDLEAIETPETILLATVSGEQSRDRTDRAVVTPWLKFLWETYRTVLEILKNNARLEVMYQTTALQAFQFCLKYTRKTEFRRLCELLRNHVQNAAKYSAQMHAINLSDPDTLQRHLDTRFQQLNVAVELELWQEAFRSIEDIHTLLSLSKRPAKNVMMANYYEKLARIFLVSENYLFHAAAFSRYYNLLRQSAAALAAGQGTKKENPSVTEADMTKAASFVLLSALSIPVISTSRSRGALVDVDEVRKNKNTRLTNLLGMASPPTRAVLFKDALNKGLLKRARPEIRDLYNILEVDFHPLSICKKITPILKQIGADPEMEKYVLPLQQVILTRLFQQLSQVYESVELKFVYELAQFPDPFQITPSMIEKFIMNGCKKGDLAIRVDHISGVLTFDTDVFSSAKALHPGSAAGSAESEVGSVQRLQNTPAEIARLQLTRLAKTLHVTCMYVDPSYNEARLQAKRAALARAEAGAAKEHEETLARRVIIEKKKEAATDALQRKQREEETRKRIRTQQLQEAEKQRLLDEHREREKKRIKDEQDRIRQQELKKQLEELKTGVKGIDISELDLNELDANRLRAMKLAQLEKEKNELNDRIRTTAKRIDHLERAFRREELKHVPEDYEKQKQRDMEIYEATKAEALKEAEDKHKEAVALKHRLSRLVPQFNSFRKEVSEKRHEEFEKRRKAAERDFEAKKMQRIKEVQERRRRERAEREEEERRRKEEEERIRREEEERTAKEEERRRVLAEEKAKREEERKRLDELAAKQKQREEEAEARRAARRTGGAEPEAAPERAAPTERTAPRLNLAPRTGGAGPSWRERQAAKEAAGGTPAAPAAAAPEPAREEPAPVRRTGGYVPPHLRSGASATPAAPAPAPSTERYVPRAMREAGSSQPPSRTQTPGSSSDKPEESKPAAGKWVPRWKQQQGGQ.

Residues 92–121 (LKKFIELAEKKVTEAQAKADEIQSSLESAA) are a coiled coil. In terms of domain architecture, PCI spans 339 to 523 (MTKAASFVLL…GVLTFDTDVF (185 aa)). Residues 580–906 (EARLQAKRAA…AEARRAARRT (327 aa)) are a coiled coil. 2 stretches are compositionally biased toward basic and acidic residues: residues 617–632 (AATD…EETR) and 794–901 (KEVS…EARR). 2 disordered regions span residues 617–646 (AATD…AEKQ) and 794–1052 (KEVS…QGGQ). Low complexity-rich tracts occupy residues 905-927 (RTGG…TAPR) and 948-964 (KEAA…AAPE). A compositionally biased stretch (polar residues) spans 1013–1028 (GSSQPPSRTQTPGSSS).

The protein belongs to the eIF-3 subunit A family. Component of the eukaryotic translation initiation factor 3 (eIF-3) complex.

It is found in the cytoplasm. RNA-binding component of the eukaryotic translation initiation factor 3 (eIF-3) complex, which is involved in protein synthesis of a specialized repertoire of mRNAs and, together with other initiation factors, stimulates binding of mRNA and methionyl-tRNAi to the 40S ribosome. The eIF-3 complex specifically targets and initiates translation of a subset of mRNAs involved in cell proliferation. The protein is Eukaryotic translation initiation factor 3 subunit A (tif32) of Aspergillus niger (strain ATCC MYA-4892 / CBS 513.88 / FGSC A1513).